We begin with the raw amino-acid sequence, 195 residues long: Thymidine kinase (195 aa).

ATP-binding positions include 15–22 (GSMFSGKS) and 88–91 (DEVQ). E89 functions as the Proton acceptor in the catalytic mechanism. Zn(2+)-binding residues include C145, C148, C183, and C186.

This sequence belongs to the thymidine kinase family. Homotetramer.

It is found in the cytoplasm. The catalysed reaction is thymidine + ATP = dTMP + ADP + H(+). This Bacillus cereus (strain AH187) protein is Thymidine kinase.